The sequence spans 1149 residues: Potassium channel subfamily U member 1 (1149 aa).

Topologically, residues 1–24 (MFQTKLRNETWEDLPKMSCTTEIQ) are extracellular. A helical membrane pass occupies residues 25-45 (AAFILSSFVTFFSGLIILLIF). Residues 46–101 (RLIWRSVKKWQIIKGTGIILELFTSGTIARSHVRSLHFQGQFRDHIEMLLSAQTFV) lie on the Cytoplasmic side of the membrane. A helical transmembrane segment spans residues 102-122 (GQVLVILVFVLSIGSLIIYFI). Residues 123-138 (NSADPVGSCSSYEDKT) are Extracellular-facing. Residues 139-159 (IPIDLVFNAFFSFYFGLRFMA) traverse the membrane as a helical segment. Residues 160–163 (ADDK) are Cytoplasmic-facing. The helical transmembrane segment at 164-184 (IKFWLEMNSIVDIFTIPPTFI) threads the bilayer. The Extracellular portion of the chain corresponds to 185–188 (SYYL). The chain crosses the membrane as a helical; Voltage-sensor span at residues 189-209 (KSNWLGLRFLRALRLLELPQI). Over 210-226 (LQILRAIKTSNSVKFSK) the chain is Cytoplasmic. The helical transmembrane segment at 227–247 (LLSIILSTWFTAAGFIHLVEN) threads the bilayer. Residues 248–259 (SGDPWLKGRNSQ) lie on the Extracellular side of the membrane. The segment at residues 260–282 (NISYFESIYLVMATTSTVGFGDV) is an intramembrane region (pore-forming). Positions 276–279 (TVGF) match the Selectivity for potassium motif. The Extracellular segment spans residues 283-291 (VAKTSLGRT). Residues 292 to 312 (FIMFFTLGSLILFANYIPEMV) traverse the membrane as a helical segment. Residues 313–1149 (ELFANKRKYT…EDPFAYSEPL (837 aa)) lie on the Cytoplasmic side of the membrane. RCK N-terminal domains lie at 331 to 473 (KKFI…DNII) and 713 to 884 (RNHI…EGSL). Disordered stretches follow at residues 828–854 (QIDS…NEKS) and 1118–1149 (SQIP…SEPL). Positions 830–840 (DSSSDPSPSVS) are enriched in low complexity. A compositionally biased stretch (basic and acidic residues) spans 1125–1135 (NAKENERKTSD).

This sequence belongs to the potassium channel family. Calcium-activated (TC 1.A.1.3) subfamily. KCa5.1/KCNU1 sub-subfamily. In terms of assembly, homotetramer; which constitutes the activated potassium channel. Interacts with LRRC52; this interaction changes channel gating properties, such as shifting gating to more negative potentials at a given pH. As to expression, testis-specific.

It localises to the cell membrane. The protein localises to the cell projection. Its subcellular location is the cilium. It is found in the flagellum membrane. It catalyses the reaction K(+)(in) = K(+)(out). With respect to regulation, regulated by changes in cytosolic pH; activated by alkalization. Activated by intracellular Ca(2+). Despite strong sequence similarity, human KCNU1 channels are significantly more sensitive to activation by internal Ca(2+) and less pH-sensitive than mouse KCNU1. VU0546110 acts as a selective inhibitor. The auxiliary subunit LRRC52 shifts the activation of KCNU1 to more negative potentials at a given pH. Its function is as follows. Testis-specific potassium channel activated by both intracellular pH and membrane voltage that mediates export of K(+). Represents the primary spermatozoan K(+) current. The channel underlies a pH-triggered membrane hyperpolarization during the process of sperm capacitation, as sperm encounter the alkaline environment near the ovum in the female reproductive tract, thereby playing an essential for male fertility. In Homo sapiens (Human), this protein is Potassium channel subfamily U member 1.